The following is a 276-amino-acid chain: Rhomboid protease GlpG homolog (276 aa).

A run of 6 helical transmembrane segments spans residues 94 to 114 (GPLT…MSII), 142 to 162 (LLLH…WYLA), 168 to 188 (SVGS…GGVI), 192 to 212 (IAGP…GYVW), 225 to 245 (LPRG…LGLF), and 252 to 272 (ADLV…TLHA).

Belongs to the peptidase S54 family.

It localises to the cell inner membrane. The sequence is that of Rhomboid protease GlpG homolog (glpG) from Cronobacter sakazakii (strain ATCC BAA-894) (Enterobacter sakazakii).